The primary structure comprises 137 residues: Small ribosomal subunit protein uS11A (137 aa).

At serine 2 the chain carries N-acetylserine. The interval 117-137 is disordered; it reads DVTPVPSDSTRKKGGRRGRRL. Residues 128 to 137 show a composition bias toward basic residues; it reads KKGGRRGRRL.

The protein belongs to the universal ribosomal protein uS11 family. Component of the small ribosomal subunit (SSU). Mature yeast ribosomes consist of a small (40S) and a large (60S) subunit. The 40S small subunit contains 1 molecule of ribosomal RNA (18S rRNA) and 33 different proteins (encoded by 57 genes). The large 60S subunit contains 3 rRNA molecules (25S, 5.8S and 5S rRNA) and 46 different proteins (encoded by 81 genes). uS11 interacts with eS1 forming part of the mRNA exit tunnel. uS11 interacts with snoRNA U3. uS11 interacts with MPP10. Component of the ribosomal small subunit (SSU) processome composed of at least 40 protein subunits and snoRNA U3. In terms of processing, N-terminally acetylated by acetyltransferase NatA.

It localises to the cytoplasm. The protein resides in the nucleus. Its subcellular location is the nucleolus. Component of the ribosome, a large ribonucleoprotein complex responsible for the synthesis of proteins in the cell. The small ribosomal subunit (SSU) binds messenger RNAs (mRNAs) and translates the encoded message by selecting cognate aminoacyl-transfer RNA (tRNA) molecules. The large subunit (LSU) contains the ribosomal catalytic site termed the peptidyl transferase center (PTC), which catalyzes the formation of peptide bonds, thereby polymerizing the amino acids delivered by tRNAs into a polypeptide chain. The nascent polypeptides leave the ribosome through a tunnel in the LSU and interact with protein factors that function in enzymatic processing, targeting, and the membrane insertion of nascent chains at the exit of the ribosomal tunnel. uS11 is involved in nucleolar processing of pre-18S ribosomal RNA and ribosome assembly. The protein is Small ribosomal subunit protein uS11A of Saccharomyces cerevisiae (strain ATCC 204508 / S288c) (Baker's yeast).